The following is a 119-amino-acid chain: Large ribosomal subunit protein bL20 (119 aa).

It belongs to the bacterial ribosomal protein bL20 family.

Functionally, binds directly to 23S ribosomal RNA and is necessary for the in vitro assembly process of the 50S ribosomal subunit. It is not involved in the protein synthesizing functions of that subunit. In Alkaliphilus oremlandii (strain OhILAs) (Clostridium oremlandii (strain OhILAs)), this protein is Large ribosomal subunit protein bL20.